Consider the following 196-residue polypeptide: Cyclin-dependent kinase inhibitor 6 (196 aa).

Disordered stretches follow at residues 1–36 (MSER…PDSH) and 55–151 (ASDE…RKTP). The span at 124–139 (SEGLGETTTEMESSSA) shows a compositional bias: low complexity. Residue Thr152 is modified to Phosphothreonine; by KIN10.

This sequence belongs to the CDI family. ICK/KRP subfamily. In terms of assembly, specifically interacts with CDKA-1, but not with CDKB1-1. Interacts with CYCD1-1, CYCD4-1 and RHF1A. Binds to FBL17. Interacts with KIN10. Interacts with CYCD3-1. Post-translationally, ubiquitinated by RHF1A and SCF(FBL17). Ubiquitination leads to its subsequent degradation, thus controlling cell cycle progression. The phosphorylation at Thr-152 by KIN10 represses its activity. Expressed in newly formed organs such as the shoot apex. Expressed in cotyledon, primary root and marginal region of the leaves as well as in developing pollen.

It localises to the nucleus. The protein localises to the nucleoplasm. Its activity is regulated as follows. Down-regulated by KIN10 under a phosphorylation-dependent manner. In terms of biological role, binds and inhibits CYCD2-1/CDKA-1 complex kinase activity. Regulates cell division which is crucial for plant growth, development and morphogenesis. May inhibit CDK kinases specifically involved in the G1/S phase transition. The protein is Cyclin-dependent kinase inhibitor 6 (KRP6) of Arabidopsis thaliana (Mouse-ear cress).